The primary structure comprises 287 residues: Mitochondrial dicarboxylate carrier (287 aa).

3 Solcar repeats span residues serine 8–arginine 88, glutamate 101–leucine 188, and aspartate 197–asparagine 280. 6 consecutive transmembrane segments (helical) span residues tryptophan 10–leucine 30, glycine 63–tyrosine 82, valine 103–valine 123, glycine 163–tyrosine 182, phenylalanine 203–leucine 223, and glycine 255–glutamate 275.

Belongs to the mitochondrial carrier (TC 2.A.29) family. As to expression, present in high amounts in liver and kidney, and at lower levels in all the other tissues analyzed.

It localises to the mitochondrion inner membrane. It catalyses the reaction (S)-malate(in) + phosphate(out) = (S)-malate(out) + phosphate(in). It carries out the reaction malonate(out) + (S)-malate(in) = malonate(in) + (S)-malate(out). The catalysed reaction is (S)-malate(in) + succinate(out) = (S)-malate(out) + succinate(in). The enzyme catalyses (S)-malate(in) + sulfate(out) = (S)-malate(out) + sulfate(in). It catalyses the reaction malonate(out) + phosphate(in) = malonate(in) + phosphate(out). It carries out the reaction succinate(out) + phosphate(in) = succinate(in) + phosphate(out). The catalysed reaction is sulfate(out) + phosphate(in) = sulfate(in) + phosphate(out). The enzyme catalyses malonate(out) + succinate(in) = malonate(in) + succinate(out). In terms of biological role, catalyzes the electroneutral exchange or flux of physiologically important metabolites such as dicarboxylates (malonate, malate, succinate), inorganic sulfur-containing anions, and phosphate, across mitochondrial inner membrane. Plays an important role in gluconeogenesis, fatty acid metabolism, urea synthesis, and sulfur metabolism, particularly in liver, by supplying the substrates for the different metabolic processes. Regulates fatty acid release from adipocytes, and contributes to systemic insulin sensitivity. The polypeptide is Mitochondrial dicarboxylate carrier (SLC25A10) (Homo sapiens (Human)).